Reading from the N-terminus, the 1551-residue chain is MGFCLALTWTFLVGSWTSMGAQKPISWEVQRFDGWYNNLMEHKWGSKGSRLQRLVPASYADGVYQPLGEPHLPNPRDLSNAAMRGPAGQASLRNRTVLGVFFGYHVLSDLVSVETPGCPAEFLNIRIPPGDPVFDPNGRGDVVLPFQRSRWDPESGQSPSNPRDLTNAVTGWLDGSAIYGSSHSWSDALRSFSGGQLASGPDPAFPRNAQPPLLMWSAPDPASGQRGPGGLYAFGAERGNRDPFLQALGLLWFRYHNLCAQRLARQHPHWGDEELFQHARKRVIATYQNIALYEWLPSFLQQAPVKYAGYNPFLDPSISPEFLVASEQFFSTMVPPGIYMRNASCHFQEVINRNSSISRALRVCNSYWSRKHPNLRRAEDVDALLLGMASQIAEREDHVVVEDVLDFWPGSLKFSRTDHVAGCLQRGRDLGLPSYTKARAALGLPPITRWQDINPALSQNNHTVLEATAALYNQDLSQLELLPGGLLESHGDPGPLFSAIVLNQFVRLRDGDRYWFENTRNGLFSEEEIAEIRNTSLRDVLVAVTNMNPSTLQPNVFFWHMGDPCPQPRQLSTQGLPACAPSTMQDYFEGSGFGFGVTIGTLCCFPLVSLLSAWIVARLRKKNFKKLQGQDRKSVMSEKLVGGMEALEWQGHKEPCRPVLVHLQPGQICVVDGRLSVLRTIQLRPPQQVNLILSGNRGRRALLLKIPKEYDLVLLFNLEEERQVLVENLRGALKESGLKFQEWELREQELMRTAVTRQQRSHLLETFFRHLFSQVLDIDQADAGTLPLDSSQKVQEALTCELSRAEFAESLGLKPQDMFVESMFSLADKDGNGYLSFREFLDILVVFMKGSPEEKSRLMFRMYDFDGNGLISKDEFIRMLRSFIEISNNCLSKAQLTEVVESMFRESGFQDKEELTWEDFHFMLRDHDSELRFTQLCVRGVEVPEVIKDLCRRASYISQEKICPSPRVSARCPHSNTEVEWTPQRLQCPVDTDPPQEIRRRFGKKVTSFQPLLFTEAQREKFQRSRRHQTLQQFKRFIENYRRHIGCVAVFYAITGGLFLERAYYYAFGAHHMGITDTTRVGIILSRGTAASISFMFSYILLTMCRNLITFLRETFLNRYVPFDAAVDFHRLIASTAIVLTVLHSAGHVVNVYLFSISPLSVLSCLFPGLFHNDGSEFPQKYYWWFFQTVPGLTGVMLLLVLAIMYVFASHHFRRHSFRGFWLTHHLYILLYVLLIIHGSFGLIQLPRFHIFFLVPALIYVGDKLVSLSRKKVEISVVKAELLPSGVTHLQFQRPQGFEYKSGQWVQIACLALGTTEYHPFTLTSAPHEDTLSLHIRAAGPWTTRLREIYSPPTGDGCAKYPKLYLDGPFGEGHQEWHKFEVSVLVGGGIGVTPFASILKDLVFKSSVSCQVFCKKIYFIWVTRTQRQFEWLADIIREVEENDCQDLVSVHIYITQLAEKFDLRTTMLYICERHFQKVLNRSLFTGLRSITHFGRPPFEPFFKSLQEVHPQVRKIGVFSCGPPGMTKNVEKACQLINRQDRTHFSHHYENF.

Positions 1–21 (MGFCLALTWTFLVGSWTSMGA) are cleaved as a signal peptide. The Extracellular segment spans residues 22–596 (QKPISWEVQR…YFEGSGFGFG (575 aa)). Residues 26 to 593 (SWEVQRFDGW…MQDYFEGSGF (568 aa)) are peroxidase-like; mediates peroxidase activity. Residue asparagine 94 is glycosylated (N-linked (GlcNAc...) asparagine). The tract at residues 197 to 222 (LASGPDPAFPRNAQPPLLMWSAPDPA) is disordered. Residues asparagine 342, asparagine 354, asparagine 461, and asparagine 534 are each glycosylated (N-linked (GlcNAc...) asparagine). Residues 597 to 617 (VTIGTLCCFPLVSLLSAWIVA) traverse the membrane as a helical segment. Over 618 to 1044 (RLRKKNFKKL…KRFIENYRRH (427 aa)) the chain is Cytoplasmic. 3 EF-hand domains span residues 815 to 850 (PQDM…FMKG), 851 to 886 (SPEE…FIEI), and 895 to 930 (QLTE…HDSE). 9 residues coordinate Ca(2+): aspartate 828, aspartate 830, asparagine 832, tyrosine 834, glutamate 839, aspartate 864, aspartate 866, asparagine 868, and glutamate 875. The interval 956-1248 (YISQEKICPS…GSFGLIQLPR (293 aa)) is interaction with TXNDC11. A helical transmembrane segment spans residues 1045-1065 (IGCVAVFYAITGGLFLERAYY). At 1066–1080 (YAFGAHHMGITDTTR) the chain is on the extracellular side. A helical membrane pass occupies residues 1081-1101 (VGIILSRGTAASISFMFSYIL). Residues 1087-1269 (RGTAASISFM…YVGDKLVSLS (183 aa)) form the Ferric oxidoreductase domain. At 1102-1151 (LTMCRNLITFLRETFLNRYVPFDAAVDFHRLIASTAIVLTVLHSAGHVVN) the chain is on the cytoplasmic side. A helical membrane pass occupies residues 1152-1172 (VYLFSISPLSVLSCLFPGLFH). Residues 1173 to 1188 (NDGSEFPQKYYWWFFQ) are Extracellular-facing. Residues 1189–1209 (TVPGLTGVMLLLVLAIMYVFA) form a helical membrane-spanning segment. Over 1210-1226 (SHHFRRHSFRGFWLTHH) the chain is Cytoplasmic. Residues 1227–1247 (LYILLYVLLIIHGSFGLIQLP) traverse the membrane as a helical segment. Residue arginine 1248 is a topological domain, extracellular. The chain crosses the membrane as a helical span at residues 1249 to 1269 (FHIFFLVPALIYVGDKLVSLS). The FAD-binding FR-type domain maps to 1270-1376 (RKKVEISVVK…DGPFGEGHQE (107 aa)). Over 1270–1551 (RKKVEISVVK…THFSHHYENF (282 aa)) the chain is Cytoplasmic.

In the N-terminal section; belongs to the peroxidase family. Interacts with TPO and CYBA. Interacts with TXNDC11. N-glycosylated. As to expression, expressed in thyrocytes (at protein level). Specifically expressed in thyroid.

The protein resides in the apical cell membrane. It carries out the reaction NADH + O2 + H(+) = H2O2 + NAD(+). The catalysed reaction is NADPH + O2 + H(+) = H2O2 + NADP(+). Its pathway is hormone biosynthesis; thyroid hormone biosynthesis. With respect to regulation, peroxidase activity is inhibited by aminobenzohydrazide. The NADPH oxidase activity is calcium-dependent. Its function is as follows. Generates hydrogen peroxide which is required for the activity of thyroid peroxidase/TPO and lactoperoxidase/LPO. Plays a role in thyroid hormones synthesis and lactoperoxidase-mediated antimicrobial defense at the surface of mucosa. May have its own peroxidase activity through its N-terminal peroxidase-like domain. The polypeptide is Dual oxidase 1 (DUOX1) (Canis lupus familiaris (Dog)).